Here is a 520-residue protein sequence, read N- to C-terminus: TnpB-like protein L79 (520 aa).

Over residues 21 to 47 the composition is skewed to basic residues; it reads GSKTKKKVFVKKKPPDKKPLKKPVKKT. The tract at residues 21 to 52 is disordered; that stretch reads GSKTKKKVFVKKKPPDKKPLKKPVKKTVKTDK. Residues Cys-474, Cys-477, Cys-491, and Cys-494 each contribute to the Zn(2+) site.

In the central section; belongs to the transposase 2 family. The protein in the C-terminal section; belongs to the transposase 35 family.

This is TnpB-like protein L79 from Acanthamoeba polyphaga mimivirus (APMV).